We begin with the raw amino-acid sequence, 271 residues long: Eukaryotic translation initiation factor 3 subunit G (271 aa).

Disordered regions lie at residues 1–29 (MPAL…SEVI) and 143–185 (KPTK…MRGR). An RRM domain is found at 189–267 (SAIRISNLSE…LILSVEWSKP (79 aa)).

The protein belongs to the eIF-3 subunit G family. Component of the eukaryotic translation initiation factor 3 (eIF-3) complex.

The protein localises to the cytoplasm. In terms of biological role, RNA-binding component of the eukaryotic translation initiation factor 3 (eIF-3) complex, which is involved in protein synthesis of a specialized repertoire of mRNAs and, together with other initiation factors, stimulates binding of mRNA and methionyl-tRNAi to the 40S ribosome. The eIF-3 complex specifically targets and initiates translation of a subset of mRNAs involved in cell proliferation. This subunit can bind 18S rRNA. This chain is Eukaryotic translation initiation factor 3 subunit G, found in Anopheles gambiae (African malaria mosquito).